A 241-amino-acid chain; its full sequence is MTEGEGRIQLEPSWKARVGDWLLRPQMQELSAFLRQRKAAGARVFPPGPQIFAAFDATPFEQVKVVILGQDPYHGEGQAHGLCFSVLPGVPVPPSLLNIYKEIQDDLGIARPDHGYLMPWARQGVLLLNAVLTVEQGRAGAHQNKGWEGFTDHVVDTLNREREGLVFLLWGSYAQSKGKVIDQARHRVLKAPHPSPLSAHRGFLGCRHFSKTNDHLRRRGLSPIDWSLPPRSALDTTSTGA.

Residue Asp-71 is the Proton acceptor of the active site.

This sequence belongs to the uracil-DNA glycosylase (UDG) superfamily. UNG family.

The protein resides in the cytoplasm. The catalysed reaction is Hydrolyzes single-stranded DNA or mismatched double-stranded DNA and polynucleotides, releasing free uracil.. In terms of biological role, excises uracil residues from the DNA which can arise as a result of misincorporation of dUMP residues by DNA polymerase or due to deamination of cytosine. The sequence is that of Uracil-DNA glycosylase from Xanthomonas euvesicatoria pv. vesicatoria (strain 85-10) (Xanthomonas campestris pv. vesicatoria).